A 260-amino-acid polypeptide reads, in one-letter code: Fructose import ATP-binding protein FrcA (260 aa).

An ABC transporter domain is found at 7 to 251; that stretch reads LTARGLVKRY…DAVAFMTGAK (245 aa). 39 to 46 serves as a coordination point for ATP; sequence GDNGAGKS.

The protein belongs to the ABC transporter superfamily. The complex is composed of two ATP-binding proteins (FrcA), two transmembrane proteins (FrcC) and a solute-binding protein (FrcB).

It localises to the cell inner membrane. It carries out the reaction D-fructose(out) + ATP + H2O = D-fructose(in) + ADP + phosphate + H(+). Its function is as follows. Part of the high-affinity ABC transporter complex FrcBCA involved in fructose uptake. Is also a high-affinity transporter for ribose and mannose. Responsible for energy coupling to the transport system. The protein is Fructose import ATP-binding protein FrcA of Rhizobium meliloti (Ensifer meliloti).